Consider the following 219-residue polypeptide: MSRMAFDRQKIVEAVKEAKARAKPRNFTQSVEVAVNLKDIDLKRPENRFKLEVVLPHGRGKDVKIAVIADGAVAEAARRLGLDVISSAELEEIAKSPRQARKLAKKYDFFIAEAPLMPKIGRYLGRYLGPRNKMPVVVPPTMTNIEPIVEKLKKTVRIQLKDNPVVHAPVGTEKMSDEQLAENIEAVLNAIIGKLERGENQIRSVYVKTTMGPAVRVEG.

This sequence belongs to the universal ribosomal protein uL1 family. Part of the 50S ribosomal subunit.

Its function is as follows. Binds directly to 23S rRNA. Probably involved in E site tRNA release. In terms of biological role, protein L1 is also a translational repressor protein, it controls the translation of its operon by binding to its mRNA. The sequence is that of Large ribosomal subunit protein uL1 from Pyrococcus horikoshii (strain ATCC 700860 / DSM 12428 / JCM 9974 / NBRC 100139 / OT-3).